We begin with the raw amino-acid sequence, 1317 residues long: Putative late blight resistance protein homolog R1B-14 (1317 aa).

Coiled-coil stretches lie at residues 419–442 (RYSDSLAFLKNQLQVIQTEFESLQ) and 535–556 (RMNEEIVGFKDVIENLRNRLLN). The NB-ARC domain occupies 521-823 (TVITHTSSQL…SESFIKSSEG (303 aa)). Residue 568-575 (GMPGLGKT) participates in ATP binding. LRR repeat units follow at residues 944–968 (FKFLKVLDLEHQVVIDFIPTELFYL), 987–1015 (LWNLETLILKSTPVGRHNTLLLPSTIWDM), 1090–1114 (PIRLEILKLYRSKAFKTIPFCISAP), 1138–1161 (LKHLEVLKLCDLEFGDHREWKVSN), 1164–1186 (FPQLKILKLEYLSLMKWIVADDA), and 1187–1211 (FPNLEQLVLHGCQDLMEIPSCFMDI). Positions 1251–1317 (IKKMVLKFDI…VSKLRKRGML (67 aa)) constitute an HMA domain.

This sequence belongs to the disease resistance NB-LRR family.

It localises to the cytoplasm. Its subcellular location is the membrane. Confers resistance to late blight (Phytophthora infestans) races carrying the avirulence gene Avr1. Resistance proteins guard the plant against pathogens that contain an appropriate avirulence protein via an indirect interaction with this avirulence protein. That triggers a defense system including the hypersensitive response, which restricts the pathogen growth. This Solanum demissum (Wild potato) protein is Putative late blight resistance protein homolog R1B-14 (R1B-14).